The sequence spans 172 residues: Endoribonuclease YbeY (172 aa).

Zn(2+) contacts are provided by His136, His140, and His146.

Belongs to the endoribonuclease YbeY family. The cofactor is Zn(2+).

The protein resides in the cytoplasm. Single strand-specific metallo-endoribonuclease involved in late-stage 70S ribosome quality control and in maturation of the 3' terminus of the 16S rRNA. The polypeptide is Endoribonuclease YbeY (Rickettsia canadensis (strain McKiel)).